A 291-amino-acid polypeptide reads, in one-letter code: 4-hydroxy-tetrahydrodipicolinate synthase (291 aa).

Residue T44 coordinates pyruvate. The active-site Proton donor/acceptor is the Y132. K160 (schiff-base intermediate with substrate) is an active-site residue. V202 lines the pyruvate pocket.

It belongs to the DapA family. Homotetramer; dimer of dimers.

Its subcellular location is the cytoplasm. It catalyses the reaction L-aspartate 4-semialdehyde + pyruvate = (2S,4S)-4-hydroxy-2,3,4,5-tetrahydrodipicolinate + H2O + H(+). It participates in amino-acid biosynthesis; L-lysine biosynthesis via DAP pathway; (S)-tetrahydrodipicolinate from L-aspartate: step 3/4. In terms of biological role, catalyzes the condensation of (S)-aspartate-beta-semialdehyde [(S)-ASA] and pyruvate to 4-hydroxy-tetrahydrodipicolinate (HTPA). This Clostridium perfringens (strain ATCC 13124 / DSM 756 / JCM 1290 / NCIMB 6125 / NCTC 8237 / Type A) protein is 4-hydroxy-tetrahydrodipicolinate synthase.